We begin with the raw amino-acid sequence, 575 residues long: CCR4-NOT transcription complex subunit 4 (575 aa).

The RING-type; degenerate zinc finger occupies 14–57 (CPLCMEPLEIDDINFFPCTCGYQICRFCWHRIRTDENGLCPACR). A coiled-coil region spans residues 68–104 (KPLSQEELQRIKNEKKQKQNERKQKISENRKHLASVR). Position 71 is a phosphoserine (serine 71). In terms of domain architecture, RRM spans 109–189 (NLVFVVGLSQ…VVDGRTLKAS (81 aa)). Residues 190–217 (LGTTKYCSYFLKNMQCPKPDCMYLHELG) form a C3H1-type zinc finger. 2 disordered regions span residues 256-372 (TGSV…EPQS) and 424-458 (SVQDQPSLSPTSLQNSSSHTTTAKGPGSGFLHPAA). Over residues 281–299 (DSLSIGNGDNSQQISNSDT) the composition is skewed to polar residues. A Phosphoserine modification is found at serine 301. Residues 307 to 322 (SKSNPVIPISSSNHSA) are compositionally biased toward polar residues. Position 324 is a phosphoserine (serine 324). Pro residues predominate over residues 345-356 (NPIPSGLPPFPS). Residues 428–441 (QPSLSPTSLQNSSS) show a composition bias toward low complexity. At serine 432 the chain carries Phosphoserine. Residues arginine 475 and arginine 483 each carry the asymmetric dimethylarginine modification. Serine 490 carries the post-translational modification Phosphoserine. Arginine 497 is subject to Asymmetric dimethylarginine. The interval 553-575 (PLSTSSHSLQQGQQPTSLHTTVA) is disordered.

In terms of assembly, interacts with CNOT1 via its C-terminus but does not stably associate with the CCR4-NOT complex. Interacts (via RING domain) with UBE2D2. Interacts with ABCE1, PINK1 and PELO. Autoubiquitinated.

It is found in the cytoplasm. It localises to the nucleus. The enzyme catalyses S-ubiquitinyl-[E2 ubiquitin-conjugating enzyme]-L-cysteine + [acceptor protein]-L-lysine = [E2 ubiquitin-conjugating enzyme]-L-cysteine + N(6)-ubiquitinyl-[acceptor protein]-L-lysine.. It participates in protein modification; protein ubiquitination. In terms of biological role, has E3 ubiquitin ligase activity, promoting ubiquitination and degradation of target proteins. Involved in activation of the JAK/STAT pathway. Catalyzes ubiquitination of methylated RBM15. Plays a role in quality control of translation of mitochondrial outer membrane-localized mRNA. As part of the PINK1-regulated signaling, upon mitochondria damage, ubiquitinates ABCE1 and thereby recruits autophagy receptors to the mitochondrial outer membrane to initiate mitophagy. The protein is CCR4-NOT transcription complex subunit 4 (CNOT4) of Homo sapiens (Human).